The sequence spans 621 residues: Archaeal Lon protease (621 aa).

The Cytoplasmic segment spans residues 1 to 117 (MNEEVREILG…YKEEAMKKAQ (117 aa)). 54–61 (GSPGTGKS) serves as a coordination point for ATP. A helical membrane pass occupies residues 118–136 (ARNFLIFTLVFLVIGYTVL). Residues 137–141 (TNPGN) are Extracellular-facing. The helical transmembrane segment at 142-160 (LIWGIIAAVLILMMSRYFI) threads the bilayer. The Cytoplasmic segment spans residues 161–621 (PREDRNVPKL…KFKELELAAV (461 aa)). In terms of domain architecture, Lon proteolytic spans 423–602 (GYEVGRVNGL…NEVLEHVLED (180 aa)). Active-site residues include S509 and K552.

It belongs to the peptidase S16 family. Archaeal LonB subfamily. In terms of assembly, homohexamer. Organized in a ring with a central cavity.

Its subcellular location is the cell membrane. ATP-dependent serine protease that mediates the selective degradation of mutant and abnormal proteins as well as certain short-lived regulatory proteins. Degrades polypeptides processively. The chain is Archaeal Lon protease from Archaeoglobus fulgidus (strain ATCC 49558 / DSM 4304 / JCM 9628 / NBRC 100126 / VC-16).